Consider the following 146-residue polypeptide: Large ribosomal subunit protein uL15 (146 aa).

Positions 1-45 (MTIKLHHLRPAPGSKTERTRVGRGEGSKGKTAGRGTKGTKARKNV) are disordered. Residues 15 to 28 (KTERTRVGRGEGSK) are compositionally biased toward basic and acidic residues.

Belongs to the universal ribosomal protein uL15 family. As to quaternary structure, part of the 50S ribosomal subunit.

Its function is as follows. Binds to the 23S rRNA. This chain is Large ribosomal subunit protein uL15, found in Mycobacteroides abscessus (strain ATCC 19977 / DSM 44196 / CCUG 20993 / CIP 104536 / JCM 13569 / NCTC 13031 / TMC 1543 / L948) (Mycobacterium abscessus).